A 648-amino-acid chain; its full sequence is Activatory protein CHA4 (648 aa).

Over residues 1–10 the composition is skewed to pro residues; it reads MMLEPSPPPL. A disordered region spans residues 1–37; it reads MMLEPSPPPLTTTVTPSLPSSLKKSVTDNDQNNNNVP. The segment covering 11 to 22 has biased composition (low complexity); it reads TTTVTPSLPSSL. Positions 44–70 form a DNA-binding region, zn(2)-C6 fungal-type; it reads CQNCRRRRRKCNMEKPCSNCIKFRTEC. Residues 140 to 177 are disordered; that stretch reads AQSALPSSESNDENESDAFTKKMPSESPPPVGTNSIYP. Residues Ser164 and Ser166 each carry the phosphoserine modification.

It localises to the nucleus. In terms of biological role, activates the CHA1 gene for L-serine dehydratase. Binds to the DNA sequence 5'-GVGGARAYRTRATTCCRC-3'. The chain is Activatory protein CHA4 (CHA4) from Saccharomyces cerevisiae (strain ATCC 204508 / S288c) (Baker's yeast).